The following is an 884-amino-acid chain: Putative GTP diphosphokinase RSH1, chloroplastic (884 aa).

The N-terminal 55 residues, 1–55 (MTSASSMSVSVECVNICNLTKGDGNARSDCSALSCAWKAPRALTGFLASTAHPPV), are a transit peptide targeting the chloroplast. The 108-residue stretch at 172–279 (FIIHPVAVAR…VKLADRLHNM (108 aa)) folds into the HD domain. Residues 563-626 (LGSRVFVFTP…ENAEVVEIVT (64 aa)) form the TGS domain. The span at 711–727 (QSQDKSRDTTPAPQNGS) shows a compositional bias: polar residues. The segment at 711-747 (QSQDKSRDTTPAPQNGSVWAPKVNGKHNKAIKNSSSD) is disordered. The 72-residue stretch at 797–868 (WLCVVSMDRK…LVLGVLGWSS (72 aa)) folds into the ACT domain.

This sequence belongs to the RelA/SpoT family. As to quaternary structure, interacts with RPP4. Interacts with RPP5. As to expression, expressed in hypocotyls, shoots, cotyledons, rosette leaves, sepals and pistils.

It localises to the plastid. Its subcellular location is the chloroplast. The catalysed reaction is GTP + ATP = guanosine 3'-diphosphate 5'-triphosphate + AMP. In terms of biological role, may be involved in a rapid plant ppGpp (guanosine 3'-diphosphate 5'-diphosphate)-mediated response to pathogens and other stresses. Unable to functionally complement E.coli relA mutants. In Arabidopsis thaliana (Mouse-ear cress), this protein is Putative GTP diphosphokinase RSH1, chloroplastic (RSH1).